The sequence spans 130 residues: S-adenosylmethionine decarboxylase proenzyme (130 aa).

The active-site Schiff-base intermediate with substrate; via pyruvic acid is Ser66. Ser66 bears the Pyruvic acid (Ser); by autocatalysis mark. The Proton acceptor; for processing activity role is filled by His71. Cys86 acts as the Proton donor; for catalytic activity in catalysis.

It belongs to the prokaryotic AdoMetDC family. Type 1 subfamily. As to quaternary structure, heterotetramer of two alpha and two beta chains arranged as a dimer of alpha/beta heterodimers. Pyruvate serves as cofactor. In terms of processing, is synthesized initially as an inactive proenzyme. Formation of the active enzyme involves a self-maturation process in which the active site pyruvoyl group is generated from an internal serine residue via an autocatalytic post-translational modification. Two non-identical subunits are generated from the proenzyme in this reaction, and the pyruvate is formed at the N-terminus of the alpha chain, which is derived from the carboxyl end of the proenzyme. The post-translation cleavage follows an unusual pathway, termed non-hydrolytic serinolysis, in which the side chain hydroxyl group of the serine supplies its oxygen atom to form the C-terminus of the beta chain, while the remainder of the serine residue undergoes an oxidative deamination to produce ammonia and the pyruvoyl group blocking the N-terminus of the alpha chain.

The catalysed reaction is S-adenosyl-L-methionine + H(+) = S-adenosyl 3-(methylsulfanyl)propylamine + CO2. The protein operates within amine and polyamine biosynthesis; S-adenosylmethioninamine biosynthesis; S-adenosylmethioninamine from S-adenosyl-L-methionine: step 1/1. Its function is as follows. Catalyzes the decarboxylation of S-adenosylmethionine to S-adenosylmethioninamine (dcAdoMet), the propylamine donor required for the synthesis of the polyamines spermine and spermidine from the diamine putrescine. This chain is S-adenosylmethionine decarboxylase proenzyme, found in Bacillus cereus (strain ATCC 10987 / NRS 248).